The chain runs to 319 residues: ATP-dependent 6-phosphofructokinase (319 aa).

Gly11 contacts ATP. Residue Arg21 to Arg25 coordinates ADP. Residues Arg72–Tyr73 and Gly102–Ser105 contribute to the ATP site. Asp103 contacts Mg(2+). Thr125–Asp127 serves as a coordination point for substrate. Asp127 functions as the Proton acceptor in the catalytic mechanism. Arg154 contacts ADP. Substrate contacts are provided by residues Arg162 and Met169 to Arg171. ADP-binding positions include Gly185–Glu187, Arg211, and Lys213–His215. Substrate contacts are provided by residues Glu222, Arg243, and His249–Arg252.

The protein belongs to the phosphofructokinase type A (PFKA) family. ATP-dependent PFK group I subfamily. Prokaryotic clade 'B1' sub-subfamily. As to quaternary structure, homotetramer. It depends on Mg(2+) as a cofactor.

The protein resides in the cytoplasm. It catalyses the reaction beta-D-fructose 6-phosphate + ATP = beta-D-fructose 1,6-bisphosphate + ADP + H(+). It functions in the pathway carbohydrate degradation; glycolysis; D-glyceraldehyde 3-phosphate and glycerone phosphate from D-glucose: step 3/4. With respect to regulation, allosterically activated by ADP and other diphosphonucleosides, and allosterically inhibited by phosphoenolpyruvate. Functionally, catalyzes the phosphorylation of D-fructose 6-phosphate to fructose 1,6-bisphosphate by ATP, the first committing step of glycolysis. The sequence is that of ATP-dependent 6-phosphofructokinase from Listeria innocua serovar 6a (strain ATCC BAA-680 / CLIP 11262).